The sequence spans 245 residues: Sugar fermentation stimulation protein homolog (245 aa).

Belongs to the SfsA family.

The chain is Sugar fermentation stimulation protein homolog from Yersinia pestis bv. Antiqua (strain Nepal516).